The chain runs to 626 residues: MIQLNNGIRIFVNHSMKKDIYIGISDFGFEKDINDGILGIAHLLEHILISFDNKYFNANASTSRTYMSFWCVALQKRHYEDAIRTAISWFFDKKYILKTDFSRIVLENYITELENEYYYRTEMYHCMDVLAYLYGGDLYNGGRITMLERLPEIRNMLSNRMKFLSGKNIVIFVKRLTNNILTLLTNTFGSIPKYPIIIPLDPQIQDARRKIIMMPCPFYTLLIQVDNTMNNLLAIICLVENYNLIDYETISDKLYVCISFANEDQYEYLLYNIKDMDFNINRIELDLGEDYIMNLYINFPWLKNDIFEYIHTMNTKSAMLLADLKKNMHNSILEHKFMIIYPSFTKLLYNITDKQNHGILVVGDVSFTPEKDPSMHHSNKENNNNYSKTVTKRKSKYVMYRKTPTTNNIVIDYTDSSFFDYATFYHVMKSKYEKTNLFSRLKTSTGMCYKHCFDNDDLNELINSDTFIRYNSSKPAVLYQYILLAYFVTERDIKELVDYKDAIELDMKYYSKNKILFGKNTRYDIRTKSMFVCGLIKGRKLSEKVITDYMWKLKSLGLIYYLTSIKLGISNTFYIFAFTIFPEKVYNFFVGLKEITNRCLIVSNKNTKIEEDDYSSLNKQIVIGIK.

A Zn(2+)-binding site is contributed by H42. E45 is an active-site residue. Position 46 (H46) interacts with Zn(2+).

It belongs to the peptidase M44 family. Zn(2+) serves as cofactor.

Seems to be involved in viral proteins maturation by cleavage at Ala-Gly-|-Xaa motifs. In Fowlpox virus (strain NVSL) (FPV), this protein is Probable metalloendopeptidase G1-type.